A 455-amino-acid chain; its full sequence is Catalase-like protein (455 aa).

The segment at M1–A25 is disordered.

It belongs to the catalase family.

Catalytically inactive. This chain is Catalase-like protein (katB), found in Staphylococcus aureus.